Reading from the N-terminus, the 28-residue chain is Dermaseptin-1 (28 aa).

Residue Q28 is modified to Glutamine amide.

As to expression, expressed by the skin glands.

The protein localises to the secreted. In terms of biological role, has antimicrobial activity. The polypeptide is Dermaseptin-1 (Phyllomedusa tomopterna (Tiger-striped leaf frog)).